A 102-amino-acid chain; its full sequence is Flagellar hook-basal body complex protein FliE 1 (102 aa).

Belongs to the FliE family.

The protein resides in the bacterial flagellum basal body. In Bradyrhizobium diazoefficiens (strain JCM 10833 / BCRC 13528 / IAM 13628 / NBRC 14792 / USDA 110), this protein is Flagellar hook-basal body complex protein FliE 1 (fliE1).